The sequence spans 357 residues: Molybdenum import ATP-binding protein ModC (357 aa).

Residues 1-233 enclose the ABC transporter domain; it reads MRLEVEARLR…PFPTSGPGRR (233 aa). 31–38 contacts ATP; the sequence is GRSGSGKT. Residues 293 to 357 form the Mop domain; sequence GISALNVLPG…AVVKTVALDY (65 aa).

This sequence belongs to the ABC transporter superfamily. Molybdate importer (TC 3.A.1.8) family. As to quaternary structure, the complex is composed of two ATP-binding proteins (ModC), two transmembrane proteins (ModB) and a solute-binding protein (ModA).

The protein localises to the cell inner membrane. It carries out the reaction molybdate(out) + ATP + H2O = molybdate(in) + ADP + phosphate + H(+). Functionally, part of the ABC transporter complex ModABC involved in molybdenum import. Responsible for energy coupling to the transport system. In Rhizobium meliloti (strain 1021) (Ensifer meliloti), this protein is Molybdenum import ATP-binding protein ModC.